We begin with the raw amino-acid sequence, 1048 residues long: Platelet-derived growth factor receptor beta (1048 aa).

The N-terminal stretch at 1–30 (MLRASAMRAAVLHLTVALAALLSSCTTVSC) is a signal peptide. Residues 31 to 528 (LKIVPEEKQL…LVSSSLFSQV (498 aa)) lie on the Extracellular side of the membrane. The 90-residue stretch at 35 to 124 (PEEKQLILAE…EIKEVAVFVP (90 aa)) folds into the Ig-like C2-type 1 domain. Disulfide bonds link Cys52–Cys108 and Cys153–Cys194. 4 N-linked (GlcNAc...) asparagine glycosylation sites follow: Asn87, Asn159, Asn224, and Asn239. Ig-like C2-type domains are found at residues 216–309 (PEDI…ASVN) and 319–406 (AVKS…KEVT). Cys240 and Cys293 form a disulfide bridge. 3 N-linked (GlcNAc...) asparagine glycosylation sites follow: Asn309, Asn327, and Asn457. Cys434 and Cys503 are joined by a disulfide. Residues 529-549 (VLLAVVLTLVPIIIMSIIILI) traverse the membrane as a helical segment. The Cytoplasmic segment spans residues 550–1048 (AVWKKKPRYE…PIPDPKPEKS (499 aa)). 3 positions are modified to phosphotyrosine; by autocatalysis: Tyr558, Tyr575, and Tyr577. The region spanning 596–957 (LVLGRTLGSG…FLVHCVGDML (362 aa)) is the Protein kinase domain. ATP-binding positions include 602–610 (LGSGAFGRV) and Lys630. A phosphotyrosine; by autocatalysis mark is found at Tyr735, Tyr746, Tyr758, Tyr766, and Tyr770. Asp821 (proton acceptor) is an active-site residue. 2 positions are modified to phosphotyrosine; by autocatalysis: Tyr852 and Tyr1036.

It belongs to the protein kinase superfamily. Tyr protein kinase family. CSF-1/PDGF receptor subfamily. In terms of assembly, interacts with homodimeric PDGFB and PDGFD, and with heterodimers formed by PDGFA and PDGFB. Monomer in the absence of bound ligand. Interaction with homodimeric PDGFB, heterodimers formed by PDGFA and PDGFB or homodimeric PDGFD, leads to receptor dimerization, where both PDGFRA homodimers and heterodimers with PDGFRB are observed. In terms of processing, ubiquitinated. After autophosphorylation, the receptor is polyubiquitinated, leading to its degradation. Post-translationally, autophosphorylated on tyrosine residues upon ligand binding. Autophosphorylation occurs in trans, i.e. one subunit of the dimeric receptor phosphorylates tyrosine residues on the other subunit.

The protein localises to the cell membrane. It localises to the cytoplasmic vesicle. The protein resides in the lysosome lumen. It carries out the reaction L-tyrosyl-[protein] + ATP = O-phospho-L-tyrosyl-[protein] + ADP + H(+). Its activity is regulated as follows. Present in an inactive conformation in the absence of bound ligand. Binding of PDGFB and/or PDGFD leads to dimerization and activation by autophosphorylation on tyrosine residues. In terms of biological role, tyrosine-protein kinase that acts as a cell-surface receptor for homodimeric PDGFB and PDGFD and for heterodimers formed by PDGFA and PDGFB, and plays an essential role in the regulation of embryonic development, cell proliferation, survival, differentiation, chemotaxis and migration. Plays an essential role in blood vessel development by promoting proliferation, migration and recruitment of pericytes and smooth muscle cells to endothelial cells. Required for normal development of the cardiovascular system. Required for normal recruitment of pericytes (mesangial cells) in the kidney glomerulus, and for normal formation of a branched network of capillaries in kidney glomeruli. Promotes rearrangement of the actin cytoskeleton and the formation of membrane ruffles. Binding of its cognate ligands - homodimeric PDGFB, heterodimers formed by PDGFA and PDGFB or homodimeric PDGFD -leads to the activation of several signaling cascades; the response depends on the nature of the bound ligand and is modulated by the formation of heterodimers between PDGFRA and PDGFRB. Receptor signaling is down-regulated by protein phosphatases that dephosphorylate the receptor and its down-stream effectors, and by rapid internalization of the activated receptor. The protein is Platelet-derived growth factor receptor beta (pdgfrb) of Takifugu rubripes (Japanese pufferfish).